Reading from the N-terminus, the 937-residue chain is Protocadherin alpha-7 (937 aa).

Residues 1 to 29 form the signal peptide; that stretch reads MVCPNGYDPGGRHLLLFIIILAAWEAGRG. 6 Cadherin domains span residues 30–133, 134–242, 243–350, 351–455, 456–565, and 581–678; these read QLHY…PPVF, PATQ…APVF, DRTL…APQL, TLTS…APAF, AQPE…APAL, and VPRS…APKA. Over 30–697 the chain is Extracellular; it reads QLHYSVPEEA…GPETELVDVN (668 aa). Residues Cys96 and Cys102 are joined by a disulfide bond. Residues Asn254 and Asn265 are each glycosylated (N-linked (GlcNAc...) asparagine). Asn548 carries N-linked (GlcNAc...) asparagine glycosylation. A helical membrane pass occupies residues 698–718; it reads VYLIIAICAVSSLLVLTLLLY. Residues 719–937 are Cytoplasmic-facing; it reads TALRCSAPSS…GNSTTDNSDQ (219 aa). 2 disordered regions span residues 756 to 795 and 817 to 843; these read QRVC…DWRY and AGPG…EVSP. PXXP repeat units follow at residues 774–777, 786–789, 819–822, 860–863, and 878–881; these read PSLP, PRQP, PGGP, PGNP, and PGSP. The 5 X 4 AA repeats of P-X-X-P stretch occupies residues 774-881; it reads PSLPQGPSST…PDKFIIPGSP (108 aa). Residues 775-787 are compositionally biased toward polar residues; it reads SLPQGPSSTDNPR. The interval 888–937 is disordered; it reads QEPANSQIDKSDFITFGKKEETKKKKKKKKGNKTQEKKEKGNSTTDNSDQ. Residues 896-910 show a composition bias toward basic and acidic residues; the sequence is DKSDFITFGKKEETK.

In terms of assembly, forms homodimers in trans (molecules expressed by two different cells). Forms promiscuous heterodimers in cis (at the plasma membrane of the same cell) with other protocadherins.

The protein resides in the cell membrane. In terms of biological role, calcium-dependent cell-adhesion protein involved in cells self-recognition and non-self discrimination. Thereby, it is involved in the establishment and maintenance of specific neuronal connections in the brain. The chain is Protocadherin alpha-7 from Pan troglodytes (Chimpanzee).